Here is a 65-residue protein sequence, read N- to C-terminus: Large ribosomal subunit protein bL31 (65 aa).

4 residues coordinate Zn(2+): cysteine 16, cysteine 18, cysteine 36, and cysteine 39.

The protein belongs to the bacterial ribosomal protein bL31 family. Type A subfamily. As to quaternary structure, part of the 50S ribosomal subunit. It depends on Zn(2+) as a cofactor.

In terms of biological role, binds the 23S rRNA. The chain is Large ribosomal subunit protein bL31 from Alkaliphilus metalliredigens (strain QYMF).